We begin with the raw amino-acid sequence, 191 residues long: Probable DNA-directed RNA polymerase subunit delta (191 aa).

One can recognise an HTH HARE-type domain in the interval 14–83; sequence LSMIEVARAI…GENKWGLRSW (70 aa). 2 stretches are compositionally biased toward acidic residues: residues 117–136 and 142–191; these read GDEDAIDYNDDDPEDEDFTE and EYDE…EEEV. A disordered region spans residues 117–191; sequence GDEDAIDYND…DEEEEEEEEV (75 aa).

It belongs to the RpoE family. As to quaternary structure, RNAP is composed of a core of 2 alpha, a beta and a beta' subunits. The core is associated with a delta subunit and one of several sigma factors.

In terms of biological role, participates in both the initiation and recycling phases of transcription. In the presence of the delta subunit, RNAP displays an increased specificity of transcription, a decreased affinity for nucleic acids, and an increased efficiency of RNA synthesis because of enhanced recycling. This is Probable DNA-directed RNA polymerase subunit delta from Streptococcus agalactiae serotype Ia (strain ATCC 27591 / A909 / CDC SS700).